A 320-amino-acid polypeptide reads, in one-letter code: o-succinylbenzoate synthase (320 aa).

Catalysis depends on K133, which acts as the Proton donor. Residues D161, E190, and D213 each coordinate Mg(2+). The Proton acceptor role is filled by K235.

This sequence belongs to the mandelate racemase/muconate lactonizing enzyme family. MenC type 1 subfamily. A divalent metal cation is required as a cofactor.

The enzyme catalyses (1R,6R)-6-hydroxy-2-succinyl-cyclohexa-2,4-diene-1-carboxylate = 2-succinylbenzoate + H2O. The protein operates within quinol/quinone metabolism; 1,4-dihydroxy-2-naphthoate biosynthesis; 1,4-dihydroxy-2-naphthoate from chorismate: step 4/7. It participates in quinol/quinone metabolism; menaquinone biosynthesis. Functionally, converts 2-succinyl-6-hydroxy-2,4-cyclohexadiene-1-carboxylate (SHCHC) to 2-succinylbenzoate (OSB). In Shigella boydii serotype 4 (strain Sb227), this protein is o-succinylbenzoate synthase.